Consider the following 225-residue polypeptide: Uracil-DNA glycosylase (225 aa).

Asp-65 (proton acceptor) is an active-site residue.

Belongs to the uracil-DNA glycosylase (UDG) superfamily. UNG family.

It is found in the cytoplasm. It catalyses the reaction Hydrolyzes single-stranded DNA or mismatched double-stranded DNA and polynucleotides, releasing free uracil.. Its function is as follows. Excises uracil residues from the DNA which can arise as a result of misincorporation of dUMP residues by DNA polymerase or due to deamination of cytosine. This Bacillus mycoides (strain KBAB4) (Bacillus weihenstephanensis) protein is Uracil-DNA glycosylase.